The sequence spans 573 residues: MSRGLELLIAQTILQGFDAQYGRFLEVTSGAQQRFEHADWHAVQQAMKQRIHLYDHHVGLVVEQLRCITEGKSTDVDFLLRVKEHYTHLLPDYPRFEIAESFFNSVYCRLFDHRSLSPERLFIFSSQPARRFRAIPRPLAKDFFPEKGWEKALNNVLSDLPLRLPWQNKTRDVGYISAHLVETLGEETLRHSHLQVANELFFRNKAAWLVGKLITPDATLPFLLPIHRSDDGELFVDTCLTTSAEASIVFGFARSYFMVYAPFPAALVEWLREILPVKTTAELYMAIGCQKHAKTESYREYLYYITSTDEQFIEAPGIRGMVMLVFTLPGFDRVFKVIKDQFAPQKEMTAAHVRACYQLVKEHDRVGRMADTQEFENFVLDKRQIDPTLMALLLQEAPDKITDLGDKIAISHLYIERRMVPLNIWLEQVEGAQLRDAIEEYGNAIRQLAAANIFPGDMLFKNFGVTRHGRVVFYDYDEICYMTEVNFRTIPAARYPEDELASEPWYSVSPGDVFPEEFRHWLCADPRIGPLFEEMHDDLFRADYWRSLQTRIKEGHVEDVYAYRKRQRFCLRG.

ATP-binding positions include 315-321 (APGIRGM) and K336. D371 is a catalytic residue.

It belongs to the AceK family.

The protein resides in the cytoplasm. It catalyses the reaction L-seryl-[isocitrate dehydrogenase] + ATP = O-phospho-L-seryl-[isocitrate dehydrogenase] + ADP + H(+). Its function is as follows. Bifunctional enzyme which can phosphorylate or dephosphorylate isocitrate dehydrogenase (IDH) on a specific serine residue. This is a regulatory mechanism which enables bacteria to bypass the Krebs cycle via the glyoxylate shunt in response to the source of carbon. When bacteria are grown on glucose, IDH is fully active and unphosphorylated, but when grown on acetate or ethanol, the activity of IDH declines drastically concomitant with its phosphorylation. The chain is Isocitrate dehydrogenase kinase/phosphatase from Enterobacter sp. (strain 638).